The chain runs to 907 residues: Protein translocase subunit SecA (907 aa).

ATP contacts are provided by residues glutamine 87, 105–109 (GEGKT), and aspartate 512. Residues cysteine 891, cysteine 893, cysteine 902, and histidine 903 each coordinate Zn(2+).

It belongs to the SecA family. In terms of assembly, monomer and homodimer. Part of the essential Sec protein translocation apparatus which comprises SecA, SecYEG and auxiliary proteins SecDF-YajC and YidC. The cofactor is Zn(2+).

It localises to the cell inner membrane. It is found in the cytoplasm. It catalyses the reaction ATP + H2O + cellular proteinSide 1 = ADP + phosphate + cellular proteinSide 2.. In terms of biological role, part of the Sec protein translocase complex. Interacts with the SecYEG preprotein conducting channel. Has a central role in coupling the hydrolysis of ATP to the transfer of proteins into and across the cell membrane, serving both as a receptor for the preprotein-SecB complex and as an ATP-driven molecular motor driving the stepwise translocation of polypeptide chains across the membrane. The chain is Protein translocase subunit SecA from Tolumonas auensis (strain DSM 9187 / NBRC 110442 / TA 4).